The primary structure comprises 448 residues: Receptor homology region, transmembrane domain- and RING domain-containing protein 2 (448 aa).

The first 20 residues, 1–20 (MNRALVLLLYVCTVSCLASS), serve as a signal peptide directing secretion. The Lumenal portion of the chain corresponds to 21-163 (KVILMRNNIT…IPSFENSAWS (143 aa)). 2 N-linked (GlcNAc...) asparagine glycosylation sites follow: Asn28 and Asn74. The 85-residue stretch at 60–144 (DACQNLMNKP…ETGEVLKEYA (85 aa)) folds into the PA domain. A disulfide bridge connects residues Cys62 and Cys87. The helical transmembrane segment at 164 to 184 (IMAVSFISLLAMSAVLATCFF) threads the bilayer. Over 185-448 (VRRHRIRRRT…YASANSLPDC (264 aa)) the chain is Cytoplasmic. The RING-type; atypical zinc finger occupies 232-274 (CAICLEDYTVGDKLRLLPCCHKFHAACVDSWLTSWRTFCPVCK). Residues 344 to 378 (QSSSNRRSPPISVSRSSVDLRQQAASPSPSPSQRS) are compositionally biased toward low complexity. 2 disordered regions span residues 344–380 (QSSS…RSYI) and 402–424 (MSPY…NYPL). Positions 408–423 (SPSNASPAMAGSSNYP) are enriched in polar residues.

Its subcellular location is the protein storage vacuole membrane. It is found in the golgi apparatus membrane. In terms of biological role, involved in the trafficking of vacuolar proteins. May function as a sorting receptor for protein trafficking to the protein storage vacuole (PSV). The polypeptide is Receptor homology region, transmembrane domain- and RING domain-containing protein 2 (RMR2) (Arabidopsis thaliana (Mouse-ear cress)).